Here is a 37-residue protein sequence, read N- to C-terminus: Large ribosomal subunit protein bL36 (37 aa).

Belongs to the bacterial ribosomal protein bL36 family.

The sequence is that of Large ribosomal subunit protein bL36 from Nostoc punctiforme (strain ATCC 29133 / PCC 73102).